Here is a 176-residue protein sequence, read N- to C-terminus: Small ribosomal subunit protein uS5 (176 aa).

An S5 DRBM domain is found at 14–77 (MQEKLIHINR…DQARRWMTSI (64 aa)).

This sequence belongs to the universal ribosomal protein uS5 family. In terms of assembly, part of the 30S ribosomal subunit. Contacts proteins S4 and S8.

With S4 and S12 plays an important role in translational accuracy. Its function is as follows. Located at the back of the 30S subunit body where it stabilizes the conformation of the head with respect to the body. In Acidithiobacillus ferrooxidans (strain ATCC 23270 / DSM 14882 / CIP 104768 / NCIMB 8455) (Ferrobacillus ferrooxidans (strain ATCC 23270)), this protein is Small ribosomal subunit protein uS5.